Here is a 160-residue protein sequence, read N- to C-terminus: NADH-quinone oxidoreductase subunit B (160 aa).

Cys37, Cys38, Cys102, and Cys132 together coordinate [4Fe-4S] cluster.

Belongs to the complex I 20 kDa subunit family. As to quaternary structure, NDH-1 is composed of 14 different subunits. Subunits NuoB, C, D, E, F, and G constitute the peripheral sector of the complex. [4Fe-4S] cluster is required as a cofactor.

Its subcellular location is the cell inner membrane. It carries out the reaction a quinone + NADH + 5 H(+)(in) = a quinol + NAD(+) + 4 H(+)(out). In terms of biological role, NDH-1 shuttles electrons from NADH, via FMN and iron-sulfur (Fe-S) centers, to quinones in the respiratory chain. Couples the redox reaction to proton translocation (for every two electrons transferred, four hydrogen ions are translocated across the cytoplasmic membrane), and thus conserves the redox energy in a proton gradient. In Cupriavidus pinatubonensis (strain JMP 134 / LMG 1197) (Cupriavidus necator (strain JMP 134)), this protein is NADH-quinone oxidoreductase subunit B.